Here is a 545-residue protein sequence, read N- to C-terminus: Chaperonin GroEL 4 (545 aa).

ATP-binding positions include 30–33 (TLGP), K51, 87–91 (DGTTT), G415, and D495.

Belongs to the chaperonin (HSP60) family. As to quaternary structure, forms a cylinder of 14 subunits composed of two heptameric rings stacked back-to-back. Interacts with the co-chaperonin GroES.

It is found in the cytoplasm. It carries out the reaction ATP + H2O + a folded polypeptide = ADP + phosphate + an unfolded polypeptide.. Functionally, together with its co-chaperonin GroES, plays an essential role in assisting protein folding. The GroEL-GroES system forms a nano-cage that allows encapsulation of the non-native substrate proteins and provides a physical environment optimized to promote and accelerate protein folding. The sequence is that of Chaperonin GroEL 4 from Rhizobium meliloti (strain 1021) (Ensifer meliloti).